Reading from the N-terminus, the 487-residue chain is N-succinylglutamate 5-semialdehyde dehydrogenase (487 aa).

221-226 lines the NAD(+) pocket; the sequence is GSSDTG. Catalysis depends on residues Glu-244 and Cys-278.

The protein belongs to the aldehyde dehydrogenase family. AstD subfamily.

It carries out the reaction N-succinyl-L-glutamate 5-semialdehyde + NAD(+) + H2O = N-succinyl-L-glutamate + NADH + 2 H(+). The protein operates within amino-acid degradation; L-arginine degradation via AST pathway; L-glutamate and succinate from L-arginine: step 4/5. Its function is as follows. Catalyzes the NAD-dependent reduction of succinylglutamate semialdehyde into succinylglutamate. This is N-succinylglutamate 5-semialdehyde dehydrogenase from Burkholderia orbicola (strain MC0-3).